The sequence spans 73 residues: DNA-binding protein S1FA3 (73 aa).

The Nuclear localization signal signature appears at 47 to 52 (PPRKKK). Basic residues predominate over residues 47–63 (PPRKKKPVSKKKMKKEK). Positions 47–73 (PPRKKKPVSKKKMKKEKMKQGVQVPGE) are disordered.

This sequence belongs to the S1FA transcription factor family.

It localises to the nucleus. In terms of biological role, DNA-binding protein that specifically recognizes a negative element (S1F) within the RPS1 promoter. This Arabidopsis thaliana (Mouse-ear cress) protein is DNA-binding protein S1FA3 (S1FA3).